The primary structure comprises 143 residues: Large ribosomal subunit protein uL15 (143 aa).

Residues methionine 1–glutamine 54 form a disordered region. Over residues arginine 21 to alanine 31 the composition is skewed to gly residues.

This sequence belongs to the universal ribosomal protein uL15 family. In terms of assembly, part of the 50S ribosomal subunit.

Its function is as follows. Binds to the 23S rRNA. In Paracidovorax citrulli (strain AAC00-1) (Acidovorax citrulli), this protein is Large ribosomal subunit protein uL15.